The sequence spans 376 residues: uncharacterized protein (376 aa).

Residues 1–280 (MPIPIIAHIA…RTPGFRRVVS (280 aa)) lie on the Lumenal side of the membrane. NADP(+)-binding residues include isoleucine 66, aspartate 115, arginine 178, lysine 233, valine 270, and threonine 272. The active-site Lowers pKa of active site Tyr is lysine 233. Residues 281-301 (FGKVWGLFLYLLLWPFWWLLL) traverse the membrane as a helical segment. The Cytoplasmic segment spans residues 302–376 (KGTIHGAQSF…KKKKIKKSKK (75 aa)).

The protein belongs to the short-chain dehydrogenases/reductases (SDR) family.

It localises to the cytoplasm. The protein localises to the endoplasmic reticulum membrane. May be involved in lipid metabolism. This is an uncharacterized protein from Schizosaccharomyces pombe (strain 972 / ATCC 24843) (Fission yeast).